The following is a 741-amino-acid chain: Zinc finger and BTB domain-containing protein 20 (741 aa).

Residues methionine 1 to glutamate 17 show a composition bias toward basic and acidic residues. The tract at residues methionine 1 to serine 28 is disordered. The BTB domain occupies cysteine 104–glutamine 167. Positions glycine 203–histidine 235 are disordered. The span at aspartate 206 to histidine 235 shows a compositional bias: polar residues. Threonine 211 carries the post-translational modification Phosphothreonine. Lysine 330 is covalently cross-linked (Glycyl lysine isopeptide (Lys-Gly) (interchain with G-Cter in SUMO1); alternate). Lysine 330 is covalently cross-linked (Glycyl lysine isopeptide (Lys-Gly) (interchain with G-Cter in SUMO2); alternate). Positions arginine 350–glutamate 440 are disordered. Serine 353 carries the post-translational modification Phosphoserine. Over residues glutamate 354–glutamate 367 the composition is skewed to acidic residues. The residue at position 357 (threonine 357) is a Phosphothreonine. Residue lysine 371 forms a Glycyl lysine isopeptide (Lys-Gly) (interchain with G-Cter in SUMO2) linkage. Positions alanine 404 to proline 423 are enriched in low complexity. 4 C2H2-type zinc fingers span residues tyrosine 578–histidine 600, histidine 606–histidine 628, tyrosine 634–histidine 656, and tyrosine 662–histidine 684. 2 positions are modified to phosphothreonine: threonine 690 and threonine 695. Residues tyrosine 715–histidine 737 form a C2H2-type 5 zinc finger. Lysine 723 is covalently cross-linked (Glycyl lysine isopeptide (Lys-Gly) (interchain with G-Cter in SUMO2)).

Can homodimerize. Binds to DNA. In terms of processing, sumoylated with SUMO1. As to expression, specifically expressed in early hippocampal neurons, cerebellar granule cells and gliogenic progenitors as well as in differentiated glia. Expressed in adult and aged myogenic satellite cells.

Its subcellular location is the nucleus. May be a transcription factor that may be involved in hematopoiesis, oncogenesis, and immune responses. Plays a role in postnatal myogenesis, may be involved in the regulation of satellite cells self-renewal. This chain is Zinc finger and BTB domain-containing protein 20 (Zbtb20), found in Mus musculus (Mouse).